A 266-amino-acid polypeptide reads, in one-letter code: Heat-inducible transcription repressor HrcA (266 aa).

It belongs to the HrcA family.

Functionally, negative regulator of class I heat shock genes (grpE-dnaK-dnaJ and groELS operons). Prevents heat-shock induction of these operons. The chain is Heat-inducible transcription repressor HrcA from Helicobacter pylori (strain ATCC 700392 / 26695) (Campylobacter pylori).